We begin with the raw amino-acid sequence, 384 residues long: GDSL esterase/lipase At1g71691 (384 aa).

Positions 1–27 are cleaved as a signal peptide; the sequence is MAFHFRRLCFFSALLAVVLQLLHGVSG. Catalysis depends on S62, which acts as the Nucleophile. Active-site residues include D348 and H351.

Belongs to the 'GDSL' lipolytic enzyme family.

The protein localises to the secreted. The sequence is that of GDSL esterase/lipase At1g71691 from Arabidopsis thaliana (Mouse-ear cress).